A 60-amino-acid chain; its full sequence is Beta-toxin BotIT2 (60 aa).

In terms of domain architecture, LCN-type CS-alpha/beta spans 1-60 (DGYIKGYKGCKITCVINDDYCDTECKAEGGTYGYCWKWGLACWCEDLPDEKRWKSETNTC). 4 cysteine pairs are disulfide-bonded: C10–C60, C14–C35, C21–C42, and C25–C44.

Belongs to the long (4 C-C) scorpion toxin superfamily. Sodium channel inhibitor family. Beta subfamily. As to expression, expressed by the venom gland.

The protein resides in the secreted. Its function is as follows. Beta toxins bind voltage-independently at site-4 of sodium channels (Nav) and shift the voltage of activation toward more negative potentials thereby affecting sodium channel activation and promoting spontaneous and repetitive firing. This toxin specifically acts by inducing a new current with very slow activation/deactivation kinetics due to the transformation of normal fast channels into slow ones. It possess properties of excitatory and depressant toxins. It is highly active on insects and less active on mammals. This Buthus occitanus tunetanus (Common European scorpion) protein is Beta-toxin BotIT2.